Reading from the N-terminus, the 248-residue chain is Sugar fermentation stimulation protein homolog (248 aa).

The protein belongs to the SfsA family.

The polypeptide is Sugar fermentation stimulation protein homolog (Methylorubrum extorquens (strain CM4 / NCIMB 13688) (Methylobacterium extorquens)).